The following is a 503-amino-acid chain: Arabinose import ATP-binding protein AraG 1 (503 aa).

2 consecutive ABC transporter domains span residues 5-240 and 251-497; these read LRFD…MVGR and RALG…LPQT. An ATP-binding site is contributed by 37–44; the sequence is GENGAGKS.

The protein belongs to the ABC transporter superfamily. Arabinose importer (TC 3.A.1.2.2) family. In terms of assembly, the complex is composed of two ATP-binding proteins (AraG), two transmembrane proteins (AraH) and a solute-binding protein (AraF).

The protein resides in the cell inner membrane. The catalysed reaction is L-arabinose(out) + ATP + H2O = L-arabinose(in) + ADP + phosphate + H(+). Part of the ABC transporter complex AraFGH involved in arabinose import. Responsible for energy coupling to the transport system. The sequence is that of Arabinose import ATP-binding protein AraG 1 from Burkholderia ambifaria (strain ATCC BAA-244 / DSM 16087 / CCUG 44356 / LMG 19182 / AMMD) (Burkholderia cepacia (strain AMMD)).